Here is a 191-residue protein sequence, read N- to C-terminus: Succinoglycan biosynthesis protein ExoI (191 aa).

Residues M1–L21 form a disordered region.

Its pathway is glycan metabolism; exopolysaccharide biosynthesis. In Rhizobium meliloti (strain 1021) (Ensifer meliloti), this protein is Succinoglycan biosynthesis protein ExoI (exoI).